We begin with the raw amino-acid sequence, 244 residues long: Uridylate kinase (244 aa).

An ATP-binding site is contributed by 17–20 (KVSG). Positions 25-30 (GEKGFG) are involved in allosteric activation by GTP. Gly59 is a UMP binding site. The ATP site is built by Gly60 and Arg64. Residues Asp80 and 141–148 (VGNPFFTT) each bind UMP. The ATP site is built by Thr168, Gln169, Tyr174, and Asp177.

This sequence belongs to the UMP kinase family. Homohexamer.

The protein resides in the cytoplasm. It catalyses the reaction UMP + ATP = UDP + ADP. It participates in pyrimidine metabolism; CTP biosynthesis via de novo pathway; UDP from UMP (UMPK route): step 1/1. With respect to regulation, allosterically activated by GTP. Inhibited by UTP. Functionally, catalyzes the reversible phosphorylation of UMP to UDP. This is Uridylate kinase from Ehrlichia canis (strain Jake).